The sequence spans 354 residues: Cysteine and histidine-rich domain-containing protein morgana (354 aa).

Cys4, Cys9, Cys23, His26, Cys41, Cys42, Cys58, His63, Cys140, Cys145, Cys159, His162, Cys177, Cys178, Cys194, and His199 together coordinate Zn(2+). 2 consecutive CHORD domains span residues 4–63 (CYNR…LAKH) and 140–199 (CKNN…YGEH). Residues 210–301 (VVQCRYDWHQ…LEPGSWSNLN (92 aa)) enclose the CS domain. Residues Ser324 and Ser339 each carry the phosphoserine modification.

Interacts with Hsp83.

It localises to the cytoplasm. It is found in the nucleus. The protein resides in the cytoskeleton. The protein localises to the spindle. Functionally, regulates centrosome duplication and mitotic spindle dynamics. Also involved in controlling the size of dendritic arbors. May act as co-chaperone for Hsp83. During mitotic spindle assembly, regulates microtubule (MT) dynamics by binding to MTs and promoting MT polymerisation. Promotes the elongation and retraction of terminal branches in response to changes in body size, possibly acting downstream of the TORC2 pathway to enable proportional scaling of dendritic arbors. This Drosophila melanogaster (Fruit fly) protein is Cysteine and histidine-rich domain-containing protein morgana.